Consider the following 145-residue polypeptide: MITLIGKDLAKKGNEFIFYGSVDECENCRFKASCVDSLEKNRKYKIIDVRDNEQKCPVHAENTVIPVEVDRSNITLLSSSKSIFEGSTFSYESADCDEECEYYDYCFPEGLVDGDKCIVLKNHGKHKGECKKGYKLNKLTLGFVI.

It belongs to the UPF0179 family.

This is UPF0179 protein Msm_0285 from Methanobrevibacter smithii (strain ATCC 35061 / DSM 861 / OCM 144 / PS).